A 510-amino-acid chain; its full sequence is Light-independent protochlorophyllide reductase subunit B (510 aa).

Residue aspartate 36 coordinates [4Fe-4S] cluster. Aspartate 297 serves as the catalytic Proton donor. Residue 432 to 433 (GM) coordinates substrate.

This sequence belongs to the ChlB/BchB/BchZ family. As to quaternary structure, protochlorophyllide reductase is composed of three subunits; ChlL, ChlN and ChlB. Forms a heterotetramer of two ChlB and two ChlN subunits. [4Fe-4S] cluster is required as a cofactor.

It is found in the plastid. The protein localises to the chloroplast. It catalyses the reaction chlorophyllide a + oxidized 2[4Fe-4S]-[ferredoxin] + 2 ADP + 2 phosphate = protochlorophyllide a + reduced 2[4Fe-4S]-[ferredoxin] + 2 ATP + 2 H2O. Its pathway is porphyrin-containing compound metabolism; chlorophyll biosynthesis (light-independent). In terms of biological role, component of the dark-operative protochlorophyllide reductase (DPOR) that uses Mg-ATP and reduced ferredoxin to reduce ring D of protochlorophyllide (Pchlide) to form chlorophyllide a (Chlide). This reaction is light-independent. The NB-protein (ChlN-ChlB) is the catalytic component of the complex. This chain is Light-independent protochlorophyllide reductase subunit B, found in Pinus koraiensis (Korean pine).